We begin with the raw amino-acid sequence, 240 residues long: Proline-rich antigen homolog (240 aa).

Composition is skewed to pro residues over residues 1-31 and 38-78; these read MTEQ…PAAP and APPP…PPGP. The interval 1-78 is disordered; that stretch reads MTEQPPPGGS…GGYAPPPPGP (78 aa). Residues 89–233 form the RDD domain; sequence TPWITRVLAA…KRQTLADKIM (145 aa). Transmembrane regions (helical) follow at residues 98–118, 142–162, and 203–223; these read AFID…IMLV, SMIG…YLVW, and LAHF…LWDA.

It belongs to the mycobacterial Pra family.

The protein resides in the cell membrane. This is Proline-rich antigen homolog from Mycobacterium tuberculosis (strain CDC 1551 / Oshkosh).